The primary structure comprises 743 residues: Homeobox-leucine zipper protein PROTODERMAL FACTOR 2 (743 aa).

Residues 1-72 are disordered; sequence MYHPNMFESH…KKRYHRHTQR (72 aa). Over residues 30-39 the composition is skewed to basic and acidic residues; the sequence is SREDDFETKS. Basic residues predominate over residues 60-71; that stretch reads PNKKKRYHRHTQ. The homeobox DNA-binding region spans 62–121; it reads KKKRYHRHTQRQIQELESFFKECPHPDDKQRKELSRDLNLEPLQVKFWFQNKRTQMKAQS. Positions 110–192 form a coiled coil; it reads FQNKRTQMKA…DRISAIAAKY (83 aa). The region spanning 244–476 is the START domain; sequence SETDKPIIVE…LERQCERLAS (233 aa).

This sequence belongs to the HD-ZIP homeobox family. Class IV subfamily. Interacts with GAI/RGA2, RGA/RGA1/GRS, RGL2/SCL19 and ATML1. Binds to AIL7/PLT7, ANT, BBM and AIL1. As to expression, specifically expressed in the layer 1 (L1) of shoot meristems.

Its subcellular location is the nucleus. Its function is as follows. Probable transcription factor that binds to the L1 box DNA sequence 5'-TAAATG[CT]A-3'. Plays a role in maintaining the identity of L1 cells, possibly by interacting with their L1 box or other target-gene promoters; binds to the LIP1 gene promoter and stimulates its expression upon imbibition. Acts as a positive regulator of gibberellins (GAs)-regulated epidermal gene expression (e.g. LIP1, LIP2, LTP1, FDH and PDF1). Functionally redundant to ATML1. Involved, together with HDG proteins (e.g. HDG1, HDG2, HDG5 and HDG12), in the regulation of flower organs development by promoting the expression of APETALA 3 (AP3) in the epidermis and internal cell layers of developing flowers. Seems to promote cell differentiation. The polypeptide is Homeobox-leucine zipper protein PROTODERMAL FACTOR 2 (Arabidopsis thaliana (Mouse-ear cress)).